We begin with the raw amino-acid sequence, 404 residues long: MKIPIYMDYHATTPVDRRVLEAMLPYFAEDFGNAASKSHAFGWRAEEAVEAAREEVARLVGASAKEIVWTSGATESDNLAVKGAAQFYQSKGKHLVTCKTEHKAVLDSMHALERQGFEVTFLDVEKDGRLDPARLRAALREDTILVSIMHANNETGVVHPIEEIGRITRAAGVLFHCDAVQSAGKLPFDVEDANVDLASLSAHKMYGPKGVGALYVRRKPRVRLIAQMDGGGHERGFRSGTLNVPGIVGFGKAAELARLEGAAEAERVLALRERLRKGLDAGLDLLTVNGSLAHRVPGNLNVSFAYVEGEALMMAIKDVAVSSGSACTSASLEPSYVLRAMGISEDLAHSSIRFGLGRFTTEEEVDHVVRLVVEKVRKLREMSPLYEMVKEGVDLSQIEWANPH.

Pyridoxal 5'-phosphate contacts are provided by residues alanine 73–threonine 74, asparagine 153, glutamine 181, and serine 201–histidine 203. Lysine 204 bears the N6-(pyridoxal phosphate)lysine mark. A pyridoxal 5'-phosphate-binding site is contributed by threonine 241. Cysteine 327 (cysteine persulfide intermediate) is an active-site residue. [2Fe-2S] cluster is bound at residue cysteine 327.

Belongs to the class-V pyridoxal-phosphate-dependent aminotransferase family. NifS/IscS subfamily. As to quaternary structure, homodimer. Forms a heterotetramer with IscU, interacts with other sulfur acceptors. Requires pyridoxal 5'-phosphate as cofactor.

The protein resides in the cytoplasm. It carries out the reaction (sulfur carrier)-H + L-cysteine = (sulfur carrier)-SH + L-alanine. It participates in cofactor biosynthesis; iron-sulfur cluster biosynthesis. In terms of biological role, master enzyme that delivers sulfur to a number of partners involved in Fe-S cluster assembly, tRNA modification or cofactor biosynthesis. Catalyzes the removal of elemental sulfur atoms from cysteine to produce alanine. Functions as a sulfur delivery protein for Fe-S cluster synthesis onto IscU, an Fe-S scaffold assembly protein, as well as other S acceptor proteins. The chain is Cysteine desulfurase IscS from Anaeromyxobacter sp. (strain Fw109-5).